A 410-amino-acid polypeptide reads, in one-letter code: Serine/threonine transporter SstT (410 aa).

Helical transmembrane passes span 11-31 (VSLVKRIIIGIIIGITLAVTV), 45-65 (FVGALKAVAPVLVFFLVISAI), 79-99 (ILILYGFSTFLASLTAVVASF), 138-158 (ALLNANYIGILTWAVLLGIAL), 179-199 (IVTWVINFAPIGIMGLVFDAI), 214-234 (LAVLLGTMCFVAFVMNPLIVF), 285-305 (ISIPLGATINMAGAAVTISVL), 327-347 (VLSAIAAAGASGVAGGSLLLI), and 353-373 (LFGIPNDIAMQVVGVGFIIGV).

It belongs to the dicarboxylate/amino acid:cation symporter (DAACS) (TC 2.A.23) family.

It is found in the cell membrane. It carries out the reaction L-serine(in) + Na(+)(in) = L-serine(out) + Na(+)(out). The catalysed reaction is L-threonine(in) + Na(+)(in) = L-threonine(out) + Na(+)(out). In terms of biological role, involved in the import of serine and threonine into the cell, with the concomitant import of sodium (symport system). This chain is Serine/threonine transporter SstT, found in Geobacillus thermodenitrificans (strain NG80-2).